A 411-amino-acid chain; its full sequence is Translation initiation factor 2 subunit gamma (411 aa).

The tr-type G domain maps to 9–201; that stretch reads QPTVNIGMVG…AIEKYIPTPE (193 aa). A G1 region spans residues 18–25; it reads GHVDHGKS. Positions 21, 25, 46, and 48 each coordinate Mg(2+). A GTP-binding site is contributed by 21–26; that stretch reads DHGKST. Positions 46–50 are G2; it reads GISIK. Residues 88–91 form a G3 region; it reads DAPG. GTP-binding positions include 144–147 and 179–181; these read NKID and SAY. The tract at residues 144–147 is G4; the sequence is NKID. Residues 179–181 form a G5 region; it reads SAY.

It belongs to the TRAFAC class translation factor GTPase superfamily. Classic translation factor GTPase family. EIF2G subfamily. In terms of assembly, heterotrimer composed of an alpha, a beta and a gamma chain. Mg(2+) serves as cofactor.

The enzyme catalyses GTP + H2O = GDP + phosphate + H(+). In terms of biological role, eIF-2 functions in the early steps of protein synthesis by forming a ternary complex with GTP and initiator tRNA. The protein is Translation initiation factor 2 subunit gamma of Thermoplasma volcanium (strain ATCC 51530 / DSM 4299 / JCM 9571 / NBRC 15438 / GSS1).